The chain runs to 300 residues: D-alanine--D-alanine ligase (300 aa).

Residues 99–293 enclose the ATP-grasp domain; it reads KKILKYANIN…FAELLNSIVK (195 aa). 126–181 contributes to the ATP binding site; sequence IEKIGYPVFVKPNSGGSSVATNLVKDKEGIKEAVELALKYDKEVMIENYTKGEEIT. Mg(2+)-binding residues include Asp248, Glu260, and Asn262.

It belongs to the D-alanine--D-alanine ligase family. Requires Mg(2+) as cofactor. The cofactor is Mn(2+).

The protein resides in the cytoplasm. The enzyme catalyses 2 D-alanine + ATP = D-alanyl-D-alanine + ADP + phosphate + H(+). It functions in the pathway cell wall biogenesis; peptidoglycan biosynthesis. Its function is as follows. Cell wall formation. This chain is D-alanine--D-alanine ligase, found in Clostridium botulinum (strain Langeland / NCTC 10281 / Type F).